We begin with the raw amino-acid sequence, 165 residues long: Transcription antitermination protein NusB (165 aa).

The protein belongs to the NusB family.

In terms of biological role, involved in transcription antitermination. Required for transcription of ribosomal RNA (rRNA) genes. Binds specifically to the boxA antiterminator sequence of the ribosomal RNA (rrn) operons. The protein is Transcription antitermination protein NusB of Bradyrhizobium diazoefficiens (strain JCM 10833 / BCRC 13528 / IAM 13628 / NBRC 14792 / USDA 110).